Consider the following 1364-residue polypeptide: MEFYESTYFIILIPSVVITVIFLFFWLFMKETLYDEVLAKQKRDLKFPPTKSDKKKTEKKKNKKKEAQNGNIHESDSESTPRDFKLSDALGTDEEQVAPVPLSATEASAGIRERKKKEKKQKAAQDDHVTKESEGSKSSGKKVEPVPVTKQPTPPSEPAAAKKKPGQKKQKNDDQDTKTDSVASPAKKQEPVLLHQEVKQENVSGKKKVSAKKQKVLVDEPLIQPTTYIPLVDNSDAGALEKREVVEVAKQNMNEGIQKSGGKKMKNETDKENAEVKFKDFVMAMKNMIFTEDEARCVVEVLKEKSGAIHDVLQKASKAESAAAIHQLQDKEKLLAAVKEEAAVAKEQCKQLTQELVAEKERNGLLTAKMRERINALEKEHGTFQSKIHVSYQESQQMKIKFQQRCEQMEAEISHLKQENTILRDAVSTSTNQMESKQAAELNKLRQDCARLVNELGEKNSKLQQEELQKKNAEQAVAQLKVQQQEAERRWEEIQVYLRKRTAEHEAAQQDVQNKLVAKDNEIQSLHSKLTDMVVSKQQLEQRMLQLIESEQKRASKEDSMQLRVQELVEQNDALNAQLQKLHSQMAAQTSASVLAEELHKVIAEKDKQLKQMEDSLGNEHANLTSKEEELKVLQNMNLSLKSEIQKLQALTNEQAAAAHELERMQKSIHIKDDKIRTLEEQLREELAQTVNTKEEFKILKDQNKTLQAEVQKLQALLSEPVQPTFEANKDLLEEMERGMRERDDKIKTVEELLEAGLIQMANKEEELKVLRTENSSLRKELQSLQIQLSEQVSFQSLVDELQKVIHEKDGKIKSVEELLQAEILKVANKEKTVQALTQKIEALKEEVGNSQLEMEKQVSITSQVKELQTLLKGKENQVKTMEALLEEKEKEIVQKGERLKGQQDTVAQLTSKVQELEQQNLQQLQQVPAASQVQDLESRLRGEEEQISKLKAVLEEKEREIASQVKQLQTMQSENESFKVQIQELKQENCKQASLAVQSEELLQVVAGKEKEIASLQNELACQRNAFEQQRKKNNDLREKNWKAMEALASTEKLLQDKVNKTAKEKQQHVEAAEVETRELLQKLFPNVSLPANVSHSEWICGFEKMAKEYLRGASGSEDIKVMEQKLKEAEELHILLQLECEKYKSVLAETEGILQRLQRSVEEEESKWKIKVEESQKELKQMRSSVASLEHEVERLKEEIKEVETLKKEREHLESELEKAEIERSTYVSEVRELKDLLTELQKKLDDSYSEAVRQNEELNLLKMKLSETLSKLKVDQNERQKVAGDLPKAQESLASLEREIGKVVGDANVIENSDVRTESELTDKRLNVAVNLNQDVGHLKKLLVSVSQMLSKGREHYQLVE.

The Cytoplasmic segment spans residues 1-6 (MEFYES). The helical; Signal-anchor for type II membrane protein transmembrane segment at 7 to 29 (TYFIILIPSVVITVIFLFFWLFM) threads the bilayer. Over 30 to 1364 (KETLYDEVLA…KGREHYQLVE (1335 aa)) the chain is Lumenal. Composition is skewed to basic and acidic residues over residues 46-56 (KFPPTKSDKKK), 73-86 (HESD…DFKL), 121-135 (QKAA…ESEG), and 170-179 (QKNDDQDTKT). The interval 46–207 (KFPPTKSDKK…VKQENVSGKK (162 aa)) is disordered. Residues Asn202, Asn267, Asn623, Asn638, Asn704, Asn775, Asn976, Asn1061, Asn1088, and Asn1094 are each glycosylated (N-linked (GlcNAc...) asparagine). Residues 315-1085 (KASKAESAAA…VETRELLQKL (771 aa)) adopt a coiled-coil conformation. Residues 1116 to 1306 (SGSEDIKVME…ASLEREIGKV (191 aa)) are a coiled coil.

Belongs to the kinectin family. As to quaternary structure, parallel homodimers formed between the membrane-bound and the cytosolic form, and also between 2 cytosolic forms. Both the membrane and cytoplasmic forms seem to be myristoylated.

The protein localises to the endoplasmic reticulum membrane. In terms of biological role, receptor for kinesin thus involved in kinesin-driven vesicle motility. This is Kinectin (KTN1) from Gallus gallus (Chicken).